A 332-amino-acid polypeptide reads, in one-letter code: Delta-aminolevulinic acid dehydratase (332 aa).

The Schiff-base intermediate with substrate role is filled by Lys-202. The 5-aminolevulinate site is built by Arg-212 and Lys-225. The active-site Schiff-base intermediate with substrate is the Lys-256. Residues Ser-282 and Tyr-321 each contribute to the 5-aminolevulinate site.

It belongs to the ALAD family. As to quaternary structure, homohexamer.

It carries out the reaction 2 5-aminolevulinate = porphobilinogen + 2 H2O + H(+). It functions in the pathway porphyrin-containing compound metabolism; protoporphyrin-IX biosynthesis; coproporphyrinogen-III from 5-aminolevulinate: step 1/4. Its function is as follows. Catalyzes an early step in the biosynthesis of tetrapyrroles. Binds two molecules of 5-aminolevulinate per subunit, each at a distinct site, and catalyzes their condensation to form porphobilinogen. In Rhodobacter capsulatus (Rhodopseudomonas capsulata), this protein is Delta-aminolevulinic acid dehydratase (hemB).